The chain runs to 375 residues: Succinyl-diaminopimelate desuccinylase (375 aa).

Zn(2+) is bound at residue His66. The active site involves Asp68. Asp99 contributes to the Zn(2+) binding site. The active-site Proton acceptor is the Glu133. 3 residues coordinate Zn(2+): Glu134, Glu162, and His348.

This sequence belongs to the peptidase M20A family. DapE subfamily. As to quaternary structure, homodimer. Zn(2+) serves as cofactor. It depends on Co(2+) as a cofactor.

It catalyses the reaction N-succinyl-(2S,6S)-2,6-diaminopimelate + H2O = (2S,6S)-2,6-diaminopimelate + succinate. The protein operates within amino-acid biosynthesis; L-lysine biosynthesis via DAP pathway; LL-2,6-diaminopimelate from (S)-tetrahydrodipicolinate (succinylase route): step 3/3. Catalyzes the hydrolysis of N-succinyl-L,L-diaminopimelic acid (SDAP), forming succinate and LL-2,6-diaminopimelate (DAP), an intermediate involved in the bacterial biosynthesis of lysine and meso-diaminopimelic acid, an essential component of bacterial cell walls. This chain is Succinyl-diaminopimelate desuccinylase, found in Escherichia coli O1:K1 / APEC.